Consider the following 652-residue polypeptide: DNA ligase (652 aa).

NAD(+)-binding positions include 29–33 (DAEYD), 78–79 (SL), and E107. Catalysis depends on K109, which acts as the N6-AMP-lysine intermediate. Residues R130, E164, K278, and K302 each contribute to the NAD(+) site. C395, C398, C413, and C418 together coordinate Zn(2+). In terms of domain architecture, BRCT spans 577 to 652 (ASDAALTGMT…IKDEAWLESL (76 aa)).

This sequence belongs to the NAD-dependent DNA ligase family. LigA subfamily. Mg(2+) serves as cofactor. The cofactor is Mn(2+).

It carries out the reaction NAD(+) + (deoxyribonucleotide)n-3'-hydroxyl + 5'-phospho-(deoxyribonucleotide)m = (deoxyribonucleotide)n+m + AMP + beta-nicotinamide D-nucleotide.. In terms of biological role, DNA ligase that catalyzes the formation of phosphodiester linkages between 5'-phosphoryl and 3'-hydroxyl groups in double-stranded DNA using NAD as a coenzyme and as the energy source for the reaction. It is essential for DNA replication and repair of damaged DNA. This is DNA ligase from Streptococcus mutans serotype c (strain ATCC 700610 / UA159).